A 145-amino-acid polypeptide reads, in one-letter code: FAD synthase (145 aa).

ATP is bound by residues 9–10 (TF), 14–17 (HPGH), Asp-94, and Tyr-122.

It belongs to the archaeal FAD synthase family. In terms of assembly, homodimer. Requires a divalent metal cation as cofactor.

The enzyme catalyses FMN + ATP + H(+) = FAD + diphosphate. It participates in cofactor biosynthesis; FAD biosynthesis; FAD from FMN: step 1/1. In terms of biological role, catalyzes the transfer of the AMP portion of ATP to flavin mononucleotide (FMN) to produce flavin adenine dinucleotide (FAD) coenzyme. The sequence is that of FAD synthase from Methanocaldococcus infernus (strain DSM 11812 / JCM 15783 / ME).